The sequence spans 48 residues: uncharacterized protein (48 aa).

Residues 1 to 20 are disordered; it reads MLLKNWPSRRIQRDKSKRAG.

This is an uncharacterized protein from Bacillus subtilis (strain 168).